We begin with the raw amino-acid sequence, 156 residues long: ATP synthase subunit b (156 aa).

Residues 13–33 (AFIIFVWFCMKFVWPPLMNAI) traverse the membrane as a helical segment.

Belongs to the ATPase B chain family. As to quaternary structure, F-type ATPases have 2 components, F(1) - the catalytic core - and F(0) - the membrane proton channel. F(1) has five subunits: alpha(3), beta(3), gamma(1), delta(1), epsilon(1). F(0) has three main subunits: a(1), b(2) and c(10-14). The alpha and beta chains form an alternating ring which encloses part of the gamma chain. F(1) is attached to F(0) by a central stalk formed by the gamma and epsilon chains, while a peripheral stalk is formed by the delta and b chains.

The protein resides in the cell inner membrane. In terms of biological role, f(1)F(0) ATP synthase produces ATP from ADP in the presence of a proton or sodium gradient. F-type ATPases consist of two structural domains, F(1) containing the extramembraneous catalytic core and F(0) containing the membrane proton channel, linked together by a central stalk and a peripheral stalk. During catalysis, ATP synthesis in the catalytic domain of F(1) is coupled via a rotary mechanism of the central stalk subunits to proton translocation. Functionally, component of the F(0) channel, it forms part of the peripheral stalk, linking F(1) to F(0). In Shewanella sediminis (strain HAW-EB3), this protein is ATP synthase subunit b.